Here is a 269-residue protein sequence, read N- to C-terminus: MDKKEKRPTVLFFDSGVGGFSVYREAKKLLPNWHYLYCFDNAGFPYSERKEESIIHRTLAACQLINQRYPLDAMVIACNTASTVVLPPLRAAFDIPIIGTVPAIKPASEITKTKHIGLLATKGTVKRHYIDELIDKFAQDCIVERLGTTKLVEIAEQKIRGHSVDLISLKDELSSWAGMADLDTLVLGCTHFPLIKDEIQLCLPQVKYFMEPSAAIAKRIKYLLDDKNLQAQNEKYNQMFCTAHFPEESQFKKALHLWGFESLEVIKID.

Substrate is bound by residues 14–15 (DS) and 46–47 (YS). The active-site Proton donor/acceptor is the Cys78. Position 79–80 (79–80 (NT)) interacts with substrate. Residue Cys189 is the Proton donor/acceptor of the active site. 190–191 (TH) contacts substrate.

This sequence belongs to the aspartate/glutamate racemases family.

The enzyme catalyses L-glutamate = D-glutamate. It participates in cell wall biogenesis; peptidoglycan biosynthesis. Provides the (R)-glutamate required for cell wall biosynthesis. The protein is Glutamate racemase of Haemophilus influenzae (strain ATCC 51907 / DSM 11121 / KW20 / Rd).